We begin with the raw amino-acid sequence, 498 residues long: Cytochrome P450 71B24 (498 aa).

The chain crosses the membrane as a helical span at residues 1–21 (MSILLYFIALLSLIIIKKIKD). Heme is bound at residue Cys-442.

This sequence belongs to the cytochrome P450 family. Heme serves as cofactor.

The protein resides in the membrane. The chain is Cytochrome P450 71B24 (CYP71B24) from Arabidopsis thaliana (Mouse-ear cress).